The primary structure comprises 621 residues: Chaperone protein HtpG (621 aa).

The interval 1–328 (MIQEKKKFDA…SEDLPLNISR (328 aa)) is a; substrate-binding. The b stretch occupies residues 329–544 (ESLQHNSVLE…DAAMDIRMER (216 aa)). Residues 475–494 (SDIDVEQTTSQSEAKNTDSK) form a disordered region. The c stretch occupies residues 545–621 (FLIEQKQIAN…LNDIVQKAIL (77 aa)).

The protein belongs to the heat shock protein 90 family. As to quaternary structure, homodimer.

The protein resides in the cytoplasm. Functionally, molecular chaperone. Has ATPase activity. The protein is Chaperone protein HtpG of Rickettsia rickettsii (strain Iowa).